A 413-amino-acid chain; its full sequence is SET and MYND domain-containing protein DDB_G0273591 (413 aa).

Residues 6-311 (DGLKLSNSEL…KGDQINISYL (306 aa)) form the SET domain. The MYND-type zinc-finger motif lies at 51 to 95 (CYNCIKLIKSPSPQQVPRCFGCNEVWYCSEKCKQDNQAKHQHYEC). The tract at residues 205–232 (DNNNNNNNNNNNNNNNNNNNNNNNNNNN) is disordered. Residues 216 to 243 (NNNNNNNNNNNNNNNNNNNIEELIKLIR) are a coiled coil.

Belongs to the class V-like SAM-binding methyltransferase superfamily.

Probable methyltransferase. This chain is SET and MYND domain-containing protein DDB_G0273591, found in Dictyostelium discoideum (Social amoeba).